The following is a 252-amino-acid chain: uncharacterized protein (252 aa).

NADP(+) is bound at residue 9 to 33 (LITGGSAGIGLELAKRLLELGNEVI). Residue S139 coordinates substrate. Catalysis depends on Y152, which acts as the Proton acceptor.

It belongs to the short-chain dehydrogenases/reductases (SDR) family.

It is found in the cytoplasm. This is an uncharacterized protein from Bacillus subtilis (strain 168).